The chain runs to 158 residues: NAD(P)H-quinone oxidoreductase subunit J, chloroplastic (158 aa).

Belongs to the complex I 30 kDa subunit family. NDH is composed of at least 16 different subunits, 5 of which are encoded in the nucleus.

The protein resides in the plastid. The protein localises to the chloroplast thylakoid membrane. The catalysed reaction is a plastoquinone + NADH + (n+1) H(+)(in) = a plastoquinol + NAD(+) + n H(+)(out). It catalyses the reaction a plastoquinone + NADPH + (n+1) H(+)(in) = a plastoquinol + NADP(+) + n H(+)(out). Functionally, NDH shuttles electrons from NAD(P)H:plastoquinone, via FMN and iron-sulfur (Fe-S) centers, to quinones in the photosynthetic chain and possibly in a chloroplast respiratory chain. The immediate electron acceptor for the enzyme in this species is believed to be plastoquinone. Couples the redox reaction to proton translocation, and thus conserves the redox energy in a proton gradient. This Dioscorea elephantipes (Elephant's foot yam) protein is NAD(P)H-quinone oxidoreductase subunit J, chloroplastic.